A 305-amino-acid chain; its full sequence is MAAFTPQWNDWCPGCGNFGILNAEQQAIVELGVDTKNVVVVSGIGCSGKIPHFFRTPISGVHTLHGRAIAFATGIKLSNPDLVVIVNGGDGDLLGIGAGHFVAAGRRNVDMVVILHDNGVYGLTKGQASPTLKRGEKPKSLPRPNINDAVNPIALAISSGYTFVARGYAYDVKHLKELIKSAIKHKGLALIDVLQPCPTYNDINTKEWYDKRIYKLDTLPDWDPVVKKPEEVNEKIKRAIDKSLEWGDRIPIGIFYQNELVPSYEERIKANSPAYLDYTPAKQLIEKEGKLTTIIDPLLKEREVD.

[4Fe-4S] cluster is bound by residues cysteine 12, cysteine 15, and cysteine 46. Residues 44–47 (IGCS) and histidine 65 contribute to the thiamine diphosphate site. Residue aspartate 90 coordinates Mg(2+). Position 91–92 (91–92 (GD)) interacts with thiamine diphosphate. 2 residues coordinate Mg(2+): asparagine 118 and valine 120. 122 to 123 (GL) is a binding site for thiamine diphosphate. Cysteine 197 lines the [4Fe-4S] cluster pocket.

In terms of assembly, heterodimer composed of an alpha and a beta subunit. [4Fe-4S] cluster is required as a cofactor. The cofactor is thiamine diphosphate. Requires Mg(2+) as cofactor.

The protein localises to the cytoplasm. The enzyme catalyses a 2-oxocarboxylate + 2 oxidized [2Fe-2S]-[ferredoxin] + CoA = an acyl-CoA + 2 reduced [2Fe-2S]-[ferredoxin] + CO2 + H(+). Catalyzes the coenzyme A-dependent oxidative decarboxylation of different 2-oxoacids such as 2-oxoglutarate, pyruvate and 2-oxobutyrate to form their CoA derivatives. This Sulfolobus sp protein is 2-oxoacid:ferredoxin oxidoreductase subunit beta.